A 199-amino-acid chain; its full sequence is Recombination protein RecR (199 aa).

The C4-type zinc finger occupies 58–73 (CKTCGNIDTQSPCTVC). One can recognise a Toprim domain in the interval 81-176 (AMIVVVADVA…KVTRLAHGVP (96 aa)).

It belongs to the RecR family.

Its function is as follows. May play a role in DNA repair. It seems to be involved in an RecBC-independent recombinational process of DNA repair. It may act with RecF and RecO. The protein is Recombination protein RecR of Bradyrhizobium sp. (strain BTAi1 / ATCC BAA-1182).